We begin with the raw amino-acid sequence, 23 residues long: Hemocyanin subunit 1 (23 aa).

The segment at 1-23 (DSPGGASDTQKQHXVNSXXXKXY) is disordered.

Belongs to the tyrosinase family. Hemocyanin subfamily. As to expression, hemolymph.

The protein resides in the secreted. It is found in the extracellular space. Its function is as follows. Hemocyanins are copper-containing oxygen carriers occurring freely dissolved in the hemolymph of many mollusks and arthropods. In Cancer pagurus (Rock crab), this protein is Hemocyanin subunit 1.